We begin with the raw amino-acid sequence, 743 residues long: Inhibitor of nuclear factor kappa-B kinase subunit alpha (743 aa).

The Protein kinase domain maps to 15-300 (WDMKDRLGTG…MDCGRPQCFV (286 aa)). ATP is bound by residues 21–29 (LGTGGFGNV) and Lys44. Catalysis depends on Asp144, which acts as the Proton acceptor. The tract at residues 453-474 (LLRFNTNLTKMKNTMVSASQQL) is leucine-zipper. Residues 736–741 (LDFSWL) form an NEMO-binding region.

The protein belongs to the protein kinase superfamily. Ser/Thr protein kinase family. I-kappa-B kinase subfamily.

Its subcellular location is the cytoplasm. It localises to the nucleus. It carries out the reaction L-seryl-[I-kappa-B protein] + ATP = O-phospho-L-seryl-[I-kappa-B protein] + ADP + H(+). Activated when phosphorylated and inactivated when dephosphorylated. Its function is as follows. Phosphorylates inhibitors of NF-kappa-B thus leading to the dissociation of the inhibitor/NF-kappa-B complex and ultimately the degradation of the inhibitor. Phosphorylates 'Ser-10' of histone H3 at NF-kappa-B-regulated promoters during inflammatory responses triggered by cytokines. This chain is Inhibitor of nuclear factor kappa-B kinase subunit alpha (chuk), found in Xenopus tropicalis (Western clawed frog).